We begin with the raw amino-acid sequence, 393 residues long: NAD(P)H-quinone oxidoreductase subunit H, chloroplastic (393 aa).

This sequence belongs to the complex I 49 kDa subunit family. NDH is composed of at least 16 different subunits, 5 of which are encoded in the nucleus.

Its subcellular location is the plastid. The protein localises to the chloroplast thylakoid membrane. The catalysed reaction is a plastoquinone + NADH + (n+1) H(+)(in) = a plastoquinol + NAD(+) + n H(+)(out). The enzyme catalyses a plastoquinone + NADPH + (n+1) H(+)(in) = a plastoquinol + NADP(+) + n H(+)(out). Functionally, NDH shuttles electrons from NAD(P)H:plastoquinone, via FMN and iron-sulfur (Fe-S) centers, to quinones in the photosynthetic chain and possibly in a chloroplast respiratory chain. The immediate electron acceptor for the enzyme in this species is believed to be plastoquinone. Couples the redox reaction to proton translocation, and thus conserves the redox energy in a proton gradient. The sequence is that of NAD(P)H-quinone oxidoreductase subunit H, chloroplastic from Lobularia maritima (Sweet alyssum).